A 347-amino-acid polypeptide reads, in one-letter code: Protein RecA (347 aa).

Gly-68–Thr-75 lines the ATP pocket.

The protein belongs to the RecA family.

The protein resides in the cytoplasm. In terms of biological role, can catalyze the hydrolysis of ATP in the presence of single-stranded DNA, the ATP-dependent uptake of single-stranded DNA by duplex DNA, and the ATP-dependent hybridization of homologous single-stranded DNAs. It interacts with LexA causing its activation and leading to its autocatalytic cleavage. This chain is Protein RecA, found in Nocardia farcinica (strain IFM 10152).